We begin with the raw amino-acid sequence, 185 residues long: Alcohol dehydrogenase 1 (185 aa).

NAD(+) is bound by residues 10-15 (GLGGVG), Asp-34, Lys-39, 103-105 (VGV), and Arg-180.

Belongs to the zinc-containing alcohol dehydrogenase family. Class-I subfamily. In terms of assembly, homodimer. Zn(2+) serves as cofactor.

Its subcellular location is the cytoplasm. It carries out the reaction a primary alcohol + NAD(+) = an aldehyde + NADH + H(+). The enzyme catalyses a secondary alcohol + NAD(+) = a ketone + NADH + H(+). The sequence is that of Alcohol dehydrogenase 1 (ADH1) from Anas platyrhynchos (Mallard).